The primary structure comprises 66 residues: Cysteine proteinase inhibitor (66 aa).

Residues 18–22 (QVVAG) carry the Secondary area of contact motif.

Belongs to the cystatin family. Phytocystatin subfamily. As to expression, in tubers of untreated plants. After ABA treatment or mechanical wounding is mostly accumulated in leaves, to a lesser extent in stems, but not in roots.

In Solanum tuberosum (Potato), this protein is Cysteine proteinase inhibitor (CYS-PIN).